The primary structure comprises 174 residues: Thioredoxin O, mitochondrial (174 aa).

A mitochondrion-targeting transit peptide spans 1–59 (MALAHRLCRLPRLLPLAAAAAASKPYLPGKPSPAPPPPLSSPPPFPSLSRLFSTTPSSS). One can recognise a Thioredoxin domain in the interval 60-172 (GDSSMVVVGS…LESTMESLHK (113 aa)). Catalysis depends on nucleophile residues Cys-96 and Cys-99. Cys-96 and Cys-99 are oxidised to a cystine.

Belongs to the thioredoxin family. Plant O-type subfamily.

It localises to the mitochondrion. Probable thiol-disulfide oxidoreductase that may participate in various redox reactions. This chain is Thioredoxin O, mitochondrial, found in Oryza sativa subsp. japonica (Rice).